The following is a 185-amino-acid chain: ATP synthase subunit delta (185 aa).

Belongs to the ATPase delta chain family. As to quaternary structure, F-type ATPases have 2 components, F(1) - the catalytic core - and F(0) - the membrane proton channel. F(1) has five subunits: alpha(3), beta(3), gamma(1), delta(1), epsilon(1). F(0) has three main subunits: a(1), b(2) and c(10-14). The alpha and beta chains form an alternating ring which encloses part of the gamma chain. F(1) is attached to F(0) by a central stalk formed by the gamma and epsilon chains, while a peripheral stalk is formed by the delta and b chains.

The protein resides in the cell inner membrane. In terms of biological role, f(1)F(0) ATP synthase produces ATP from ADP in the presence of a proton or sodium gradient. F-type ATPases consist of two structural domains, F(1) containing the extramembraneous catalytic core and F(0) containing the membrane proton channel, linked together by a central stalk and a peripheral stalk. During catalysis, ATP synthesis in the catalytic domain of F(1) is coupled via a rotary mechanism of the central stalk subunits to proton translocation. Its function is as follows. This protein is part of the stalk that links CF(0) to CF(1). It either transmits conformational changes from CF(0) to CF(1) or is implicated in proton conduction. The polypeptide is ATP synthase subunit delta (Phocaeicola vulgatus (strain ATCC 8482 / DSM 1447 / JCM 5826 / CCUG 4940 / NBRC 14291 / NCTC 11154) (Bacteroides vulgatus)).